A 1011-amino-acid polypeptide reads, in one-letter code: Probable calcium-transporting ATPase (1011 aa).

Residues 1–65 (MLPENLPTDP…WKLVLAQFED (65 aa)) lie on the Cytoplasmic side of the membrane. Residues 66-84 (TLVRILLLAATVSFAMAVV) traverse the membrane as a helical segment. At 85–90 (ENNAAD) the chain is on the extracellular side. Residues 91–110 (FVEPFIILLILILNATVGVW) traverse the membrane as a helical segment. The Cytoplasmic portion of the chain corresponds to 111–258 (QENRAEGAIE…QVKLDEFGVL (148 aa)). The helical transmembrane segment at 259–278 (LSKVIGYICLVVFAVNLVRW) threads the bilayer. At 279–303 (YATHKPTKNETFFTRYIQPSVHCLK) the chain is on the extracellular side. Residues 304-321 (VAVALAVAAIPEGLPAVV) traverse the membrane as a helical segment. Over 322–770 (TTCLALGTRR…RYLISSNIGE (449 aa)) the chain is Cytoplasmic. Catalysis depends on D357, which acts as the 4-aspartylphosphate intermediate. Residue K514 participates in ATP binding. Residues 771–794 (VVCILVTGLFGLPEALSPVQLLWV) form a helical membrane-spanning segment. The Extracellular portion of the chain corresponds to 795 to 835 (NLVTDGLPATALGFNAPDRDIMEQRPRRMEEPIVNGWLFMR). A helical membrane pass occupies residues 836-856 (YMVIGVYVGLATVGGFLWWFL). The Cytoplasmic portion of the chain corresponds to 857–885 (RHGFSWHDLTTYTACSDMTNGTCLLLANP). The chain crosses the membrane as a helical span at residues 886 to 905 (QTARAIALSILVVVEMLNAL). Over 906-922 (NALSENASLIVSRPSSN) the chain is Extracellular. Residues 923 to 942 (VWLLFAIFSSLSLHLIIMYV) traverse the membrane as a helical segment. At 943-1011 (PFFAKLFNIV…MEKAQEKKKD (69 aa)) the chain is on the cytoplasmic side.

It belongs to the cation transport ATPase (P-type) (TC 3.A.3) family.

Its subcellular location is the flagellar pocket. It is found in the cell membrane. The catalysed reaction is Ca(2+)(in) + ATP + H2O = Ca(2+)(out) + ADP + phosphate + H(+). Its function is as follows. This magnesium-dependent enzyme catalyzes the hydrolysis of ATP coupled with the transport of the calcium. The chain is Probable calcium-transporting ATPase (TBA1) from Trypanosoma brucei brucei.